The following is a 280-amino-acid chain: uncharacterized protein (280 aa).

This sequence belongs to the herpesviridae BDLF2 family.

This is an uncharacterized protein from Saimiri sciureus (Common squirrel monkey).